We begin with the raw amino-acid sequence, 143 residues long: FAD synthase (143 aa).

Residues threonine 10 to phenylalanine 11, histidine 15 to histidine 18, and aspartate 93 each bind ATP.

The protein belongs to the archaeal FAD synthase family. As to quaternary structure, homodimer. A divalent metal cation serves as cofactor.

It catalyses the reaction FMN + ATP + H(+) = FAD + diphosphate. Its pathway is cofactor biosynthesis; FAD biosynthesis; FAD from FMN: step 1/1. Its function is as follows. Catalyzes the transfer of the AMP portion of ATP to flavin mononucleotide (FMN) to produce flavin adenine dinucleotide (FAD) coenzyme. This chain is FAD synthase, found in Haloterrigena turkmenica (strain ATCC 51198 / DSM 5511 / JCM 9101 / NCIMB 13204 / VKM B-1734 / 4k) (Halococcus turkmenicus).